A 157-amino-acid polypeptide reads, in one-letter code: Transcription elongation factor GreA (157 aa).

The stretch at 1-75 (MSKEIILTQE…VETLINRAKV (75 aa)) forms a coiled coil.

It belongs to the GreA/GreB family.

Necessary for efficient RNA polymerase transcription elongation past template-encoded arresting sites. The arresting sites in DNA have the property of trapping a certain fraction of elongating RNA polymerases that pass through, resulting in locked ternary complexes. Cleavage of the nascent transcript by cleavage factors such as GreA or GreB allows the resumption of elongation from the new 3'terminus. GreA releases sequences of 2 to 3 nucleotides. The protein is Transcription elongation factor GreA of Mycoplasma mycoides subsp. mycoides SC (strain CCUG 32753 / NCTC 10114 / PG1).